A 215-amino-acid polypeptide reads, in one-letter code: Probable nicotinate-nucleotide adenylyltransferase (215 aa).

It belongs to the NadD family.

It catalyses the reaction nicotinate beta-D-ribonucleotide + ATP + H(+) = deamido-NAD(+) + diphosphate. It functions in the pathway cofactor biosynthesis; NAD(+) biosynthesis; deamido-NAD(+) from nicotinate D-ribonucleotide: step 1/1. Functionally, catalyzes the reversible adenylation of nicotinate mononucleotide (NaMN) to nicotinic acid adenine dinucleotide (NaAD). The protein is Probable nicotinate-nucleotide adenylyltransferase of Coxiella burnetii (strain Dugway 5J108-111).